A 657-amino-acid polypeptide reads, in one-letter code: Probable cobalt/nickel-exporting P-type ATPase (657 aa).

5 helical membrane-spanning segments follow: residues 40–60 (WATV…NGAP), 62–82 (AMWW…SAWA), 101–121 (AAVG…IVIF), 268–288 (LGMV…GADL), and 299–319 (MIVA…LSAI). Residue Asp347 is the 4-aspartylphosphate intermediate of the active site. Positions 543 and 547 each coordinate Mg(2+). The helical transmembrane segment at 596–618 (VVTVNLAIAATFIAVLVLWDLFG) threads the bilayer.

The protein belongs to the cation transport ATPase (P-type) (TC 3.A.3) family. Type IB subfamily.

It is found in the cell membrane. Involved in heavy metal homeostasis. Probably exports nickel and cobalt ions out of the cell. The chain is Probable cobalt/nickel-exporting P-type ATPase (ctpD) from Mycobacterium bovis (strain ATCC BAA-935 / AF2122/97).